The sequence spans 1009 residues: 2-oxoglutarate dehydrogenase, mitochondrial (1009 aa).

The N-terminal 39 residues, 1-39 (MLRFIPSSAKARALRRSAVTAYRLNRLTCLSSLQQNRTF), are a transit peptide targeting the mitochondrion. Residues R305, D404, N437, I439, and Q669 each coordinate thiamine diphosphate. Residues D404, N437, and I439 each coordinate Mg(2+).

It belongs to the alpha-ketoglutarate dehydrogenase family. It depends on thiamine diphosphate as a cofactor. The cofactor is Mg(2+).

It localises to the mitochondrion matrix. It carries out the reaction N(6)-[(R)-lipoyl]-L-lysyl-[protein] + 2-oxoglutarate + H(+) = N(6)-[(R)-S(8)-succinyldihydrolipoyl]-L-lysyl-[protein] + CO2. Catabolite repressed. Its function is as follows. The 2-oxoglutarate dehydrogenase complex catalyzes the overall conversion of 2-oxoglutarate to succinyl-CoA and CO(2). It contains multiple copies of three enzymatic components: 2-oxoglutarate dehydrogenase (E1), dihydrolipoamide succinyltransferase (E2) and lipoamide dehydrogenase (E3). The polypeptide is 2-oxoglutarate dehydrogenase, mitochondrial (kgd1) (Schizosaccharomyces pombe (strain 972 / ATCC 24843) (Fission yeast)).